Reading from the N-terminus, the 1425-residue chain is Zinc finger FYVE domain-containing protein 9 (1425 aa).

Disordered regions lie at residues 201–255 (ESTE…IGRD) and 291–352 (EDLT…SGRN). Residues 202–225 (STEKDMNSEKQMDPLNRPKTEGRS) show a composition bias toward basic and acidic residues. 2 stretches are compositionally biased toward polar residues: residues 230–245 (CPTS…SPSQ) and 296–312 (KISS…SFSH). 2 positions are modified to phosphoserine: Ser-306 and Ser-668. The FYVE-type zinc finger occupies 699 to 758 (DSQAPNCMKCEARFTFTKRRHHCRACGKVFCASCCSLKCKLLYMDRKEARVCVICHSVLM). The Zn(2+) site is built by Cys-705, Cys-708, Cys-721, Cys-724, Cys-729, Cys-732, Cys-750, and Cys-753. The segment at 767–823 (MSASSQSPNPNNPAEYCSTIPPLQQAQASGALSSPPPTVMVPVGVLKHPGAEVAQPR) is SBD.

Interacts (via the SBD region) with SMAD2; the interaction recruits SMAD2 to the TGF-beta receptor and is disrupted by phosphorylation of SMAD2 upon TGF-beta receptor activation. Interacts with SMAD3. Interacts with TGFBR1 and TGFBR2; the interaction recruits SMAD2 to the TGF-beta receptor. Interacts with PML. As to expression, ubiquitous. In the brain found primarily in the cerebrovascular smooth muscle cells and reactive astrocytes.

The protein localises to the cytoplasm. Its subcellular location is the early endosome membrane. Functionally, early endosomal protein that functions to recruit SMAD2/SMAD3 to intracellular membranes and to the TGF-beta receptor. Plays a significant role in TGF-mediated signaling by regulating the subcellular location of SMAD2 and SMAD3 and modulating the transcriptional activity of the SMAD3/SMAD4 complex. Possibly associated with TGF-beta receptor internalization. This Homo sapiens (Human) protein is Zinc finger FYVE domain-containing protein 9 (ZFYVE9).